Reading from the N-terminus, the 201-residue chain is Recombination protein RecR (201 aa).

A C4-type zinc finger spans residues 58-73; the sequence is CPECGLLTEEERCGLC. Residues 81–176 enclose the Toprim domain; sequence TLLCVVESSA…RTTRIAHGVP (96 aa).

It belongs to the RecR family.

In terms of biological role, may play a role in DNA repair. It seems to be involved in an RecBC-independent recombinational process of DNA repair. It may act with RecF and RecO. The polypeptide is Recombination protein RecR (Halorhodospira halophila (strain DSM 244 / SL1) (Ectothiorhodospira halophila (strain DSM 244 / SL1))).